The primary structure comprises 543 residues: MAKILSFSDDARHQLEHGVNALADAVKVTLGPRGRNVVLDKKFGAPTITNDGVTIAKEIELTDPHENLGAQLVKEVATKTNDVAGDGTTTATVLAQALVREGLRNVAAGANPTGLKRGIDAAATKVSEALLGKAVEVSDKAAIAHVATVSAQDSTIGELIAEAMERVGRDGVITVEEGSTLATELDVTEGLQFDKGFISPNFVTDAEGQESVLEDPYILITTQKISAIEELLPLLEKVLQDSKPLLIIAEDVEGQALSTLVVNALRKTMKVCAVKAPGFGDRRKAMLQDMAILTGAELVAPELGYKLDQVGLEVLGTARRVVVDKETTTVVDGGGQAADAADRVAQIRKEIEASDSEWDREKLAERLAKLSGGVAVIRAGAATEVEMKERKHRIEDAIAATKAAVEEGTIPGGGAALAQVLPALDDDLGLDGDEKVGVSIVRKALVEPLRWIAQNAGHDGYVVVQKVVDKDWGHGLDAATGEYVDLAKAGILDPVKVTRNAVANAASIAGLLLTTESLVVDKPQEPEPAAGGHGHGHQHGPGF.

Residues 29–32, 86–90, glycine 413, 477–479, and aspartate 493 each bind ATP; these read TLGP, DGTTT, and DAA. The segment at 523 to 543 is disordered; it reads PQEPEPAAGGHGHGHQHGPGF. The segment covering 534–543 has biased composition (basic residues); sequence GHGHQHGPGF.

Belongs to the chaperonin (HSP60) family. In terms of assembly, forms a cylinder of 14 subunits composed of two heptameric rings stacked back-to-back. Interacts with the co-chaperonin GroES.

The protein resides in the cytoplasm. The enzyme catalyses ATP + H2O + a folded polypeptide = ADP + phosphate + an unfolded polypeptide.. In terms of biological role, together with its co-chaperonin GroES, plays an essential role in assisting protein folding. The GroEL-GroES system forms a nano-cage that allows encapsulation of the non-native substrate proteins and provides a physical environment optimized to promote and accelerate protein folding. The polypeptide is Chaperonin GroEL 2 (Salinispora tropica (strain ATCC BAA-916 / DSM 44818 / JCM 13857 / NBRC 105044 / CNB-440)).